Reading from the N-terminus, the 469-residue chain is Probable Xaa-Pro aminopeptidase PEPP (469 aa).

Mn(2+) contacts are provided by Asp265, Asp276, Glu399, and Glu439.

Belongs to the peptidase M24B family. It depends on Mn(2+) as a cofactor.

It catalyses the reaction Release of any N-terminal amino acid, including proline, that is linked to proline, even from a dipeptide or tripeptide.. Functionally, catalyzes the removal of a penultimate prolyl residue from the N-termini of peptides. The sequence is that of Probable Xaa-Pro aminopeptidase PEPP (PEPP) from Coccidioides posadasii (strain C735) (Valley fever fungus).